A 295-amino-acid chain; its full sequence is Cytidine deaminase (295 aa).

2 consecutive CMP/dCMP-type deaminase domains span residues 48–168 (SDKE…FGPA) and 187–295 (DDKD…FVNV). 89–91 (NME) serves as a coordination point for substrate. His-102 contributes to the Zn(2+) binding site. Residue Glu-104 is the Proton donor of the active site. Positions 129 and 132 each coordinate Zn(2+).

This sequence belongs to the cytidine and deoxycytidylate deaminase family. Homodimer. The cofactor is Zn(2+).

The enzyme catalyses cytidine + H2O + H(+) = uridine + NH4(+). The catalysed reaction is 2'-deoxycytidine + H2O + H(+) = 2'-deoxyuridine + NH4(+). Its function is as follows. This enzyme scavenges exogenous and endogenous cytidine and 2'-deoxycytidine for UMP synthesis. This Vibrio parahaemolyticus serotype O3:K6 (strain RIMD 2210633) protein is Cytidine deaminase.